The following is a 610-amino-acid chain: UvrABC system protein C (610 aa).

The GIY-YIG domain occupies 16–94 (SQPGVYRMYD…IKLYQPRYNV (79 aa)). The UVR domain occupies 204–239 (DQVLTQLIARMEKASQDLAFEEAARIRDQIQAVRRV).

It belongs to the UvrC family. As to quaternary structure, interacts with UvrB in an incision complex.

It localises to the cytoplasm. Its function is as follows. The UvrABC repair system catalyzes the recognition and processing of DNA lesions. UvrC both incises the 5' and 3' sides of the lesion. The N-terminal half is responsible for the 3' incision and the C-terminal half is responsible for the 5' incision. This is UvrABC system protein C from Salmonella typhimurium (strain LT2 / SGSC1412 / ATCC 700720).